The following is a 347-amino-acid chain: 3-keto-steroid reductase ERG27 (347 aa).

3 residues coordinate NADP(+): leucine 15, threonine 38, and arginine 44. Active-site proton donor residues include serine 179 and tyrosine 202. Positions 202, 206, and 237 each coordinate NADP(+). Lysine 206 acts as the Lowers pKa of active site Tyr in catalysis. Threonine 345 bears the Phosphothreonine mark.

It belongs to the short-chain dehydrogenases/reductases (SDR) family. ERG27 subfamily. Heterotetramer of ERG25, ERG26, ERG27 and ERG28. ERG28 acts as a scaffold to tether ERG27 and other 4,4-demethylation-related enzymes, forming a demethylation enzyme complex, in the endoplasmic reticulum. Interacts with ERG25 and ERG28. Also interacts with ERG7, but only in lipid particles.

It is found in the endoplasmic reticulum membrane. The protein resides in the lipid droplet. The catalysed reaction is 3-dehydro-4alpha-methylzymosterol + NADPH + H(+) = 4alpha-methylzymosterol + NADP(+). The protein operates within steroid biosynthesis; zymosterol biosynthesis; zymosterol from lanosterol: step 5/6. In terms of biological role, 3-keto-steroid reductase; part of the third module of ergosterol biosynthesis pathway that includes the late steps of the pathway. ERG27 is a catalytic component of the C-4 demethylation complex that catalyze the reduction of the keto group on the C-3. The third module or late pathway involves the ergosterol synthesis itself through consecutive reactions that mainly occur in the endoplasmic reticulum (ER) membrane. Firstly, the squalene synthase ERG9 catalyzes the condensation of 2 farnesyl pyrophosphate moieties to form squalene, which is the precursor of all steroids. Squalene synthase is crucial for balancing the incorporation of farnesyl diphosphate (FPP) into sterol and nonsterol isoprene synthesis. Secondly, the squalene epoxidase ERG1 catalyzes the stereospecific oxidation of squalene to (S)-2,3-epoxysqualene, which is considered to be a rate-limiting enzyme in steroid biosynthesis. Then, the lanosterol synthase ERG7 catalyzes the cyclization of (S)-2,3 oxidosqualene to lanosterol, a reaction that forms the sterol core. In the next steps, lanosterol is transformed to zymosterol through a complex process involving various demethylation, reduction and desaturation reactions. The lanosterol 14-alpha-demethylase ERG11 (also known as CYP51) catalyzes C14-demethylation of lanosterol to produce 4,4'-dimethyl cholesta-8,14,24-triene-3-beta-ol, which is critical for ergosterol biosynthesis. The C-14 reductase ERG24 reduces the C14=C15 double bond of 4,4-dimethyl-cholesta-8,14,24-trienol to produce 4,4-dimethyl-cholesta-8,24-dienol. 4,4-dimethyl-cholesta-8,24-dienol is substrate of the C-4 demethylation complex ERG25-ERG26-ERG27 in which ERG25 catalyzes the three-step monooxygenation required for the demethylation of 4,4-dimethyl and 4alpha-methylsterols, ERG26 catalyzes the oxidative decarboxylation that results in a reduction of the 3-beta-hydroxy group at the C-3 carbon to an oxo group, and ERG27 is responsible for the reduction of the keto group on the C-3. ERG28 has a role as a scaffold to help anchor ERG25, ERG26 and ERG27 to the endoplasmic reticulum and ERG29 regulates the activity of the iron-containing C4-methylsterol oxidase ERG25. Then, the sterol 24-C-methyltransferase ERG6 catalyzes the methyl transfer from S-adenosyl-methionine to the C-24 of zymosterol to form fecosterol. The C-8 sterol isomerase ERG2 catalyzes the reaction which results in unsaturation at C-7 in the B ring of sterols and thus converts fecosterol to episterol. The sterol-C5-desaturase ERG3 then catalyzes the introduction of a C-5 double bond in the B ring to produce 5-dehydroepisterol. The C-22 sterol desaturase ERG5 further converts 5-dehydroepisterol into ergosta-5,7,22,24(28)-tetraen-3beta-ol by forming the C-22(23) double bond in the sterol side chain. Finally, ergosta-5,7,22,24(28)-tetraen-3beta-ol is substrate of the C-24(28) sterol reductase ERG4 to produce ergosterol. Facilitates the association of ERG7 with lipid particles preventing its digestion in the endoplasmic reticulum and the lipid particles. The chain is 3-keto-steroid reductase ERG27 from Saccharomyces cerevisiae (strain ATCC 204508 / S288c) (Baker's yeast).